We begin with the raw amino-acid sequence, 241 residues long: Large ribosomal subunit protein uL13c (241 aa).

The transit peptide at 1–50 (MAVLCSSSTVILSSSSVKSSGSERKSPFLGFSLTAISKPSVRVGIYANSK) directs the protein to the chloroplast.

This sequence belongs to the universal ribosomal protein uL13 family. As to quaternary structure, part of the 50S ribosomal subunit.

The protein resides in the plastid. Its subcellular location is the chloroplast. The polypeptide is Large ribosomal subunit protein uL13c (RPL13) (Arabidopsis thaliana (Mouse-ear cress)).